A 420-amino-acid polypeptide reads, in one-letter code: Mitogen-activated protein kinase HOG2 (420 aa).

ATP is bound by residues 29-37 (VGMGAFGLV) and lysine 52. Aspartate 144 functions as the Proton acceptor in the catalytic mechanism. Threonine 174 is subject to Phosphothreonine. The TXY signature appears at 174-176 (TGY). Tyrosine 176 carries the post-translational modification Phosphotyrosine. Positions 372–394 (AQHHHQTQQQSSGKHTNPTTSSS) are disordered.

It belongs to the protein kinase superfamily. Ser/Thr protein kinase family. MAP kinase subfamily. HOG1 sub-subfamily. The cofactor is Mg(2+). Post-translationally, dually phosphorylated on Thr-174 and Tyr-176, which activates the enzyme.

The protein localises to the cytoplasm. It localises to the nucleus. The enzyme catalyses L-seryl-[protein] + ATP = O-phospho-L-seryl-[protein] + ADP + H(+). The catalysed reaction is L-threonyl-[protein] + ATP = O-phospho-L-threonyl-[protein] + ADP + H(+). With respect to regulation, activated by tyrosine and threonine phosphorylation. Functionally, mitogen-activated protein kinase involved in a signal transduction pathway that is activated by changes in the osmolarity of the extracellular environment. Controls osmotic regulation of transcription of target genes. The polypeptide is Mitogen-activated protein kinase HOG2 (HOG2) (Zygosaccharomyces rouxii).